A 486-amino-acid polypeptide reads, in one-letter code: Glutamyl-tRNA(Gln) amidotransferase subunit A (486 aa).

Catalysis depends on charge relay system residues K78 and S153. The active-site Acyl-ester intermediate is S177.

It belongs to the amidase family. GatA subfamily. As to quaternary structure, heterotrimer of A, B and C subunits.

The enzyme catalyses L-glutamyl-tRNA(Gln) + L-glutamine + ATP + H2O = L-glutaminyl-tRNA(Gln) + L-glutamate + ADP + phosphate + H(+). Its function is as follows. Allows the formation of correctly charged Gln-tRNA(Gln) through the transamidation of misacylated Glu-tRNA(Gln) in organisms which lack glutaminyl-tRNA synthetase. The reaction takes place in the presence of glutamine and ATP through an activated gamma-phospho-Glu-tRNA(Gln). In Desulfosudis oleivorans (strain DSM 6200 / JCM 39069 / Hxd3) (Desulfococcus oleovorans), this protein is Glutamyl-tRNA(Gln) amidotransferase subunit A.